A 222-amino-acid chain; its full sequence is Ktr system potassium uptake protein A (222 aa).

Residues 6 to 122 (NKQFAVIGLG…LEKIGADRII (117 aa)) enclose the RCK N-terminal domain. Residues Arg-16, 36-38 (DIN), 56-57 (NA), 78-80 (IGA), 103-105 (KAQ), His-109, and Glu-125 each bind NAD(+). In terms of domain architecture, RCK C-terminal spans 139 to 222 (ENVLNYIDLS…DIKRFENEGM (84 aa)).

The protein belongs to the KtrA potassium transport family. As to quaternary structure, homodimer, tetramer (dimer of homodimer) and octamer (tetramer of homodimer). Part of the KtrAB complex formed by an octameric catalytic ring of KtrA and a membrane associated dimer of KtrB forming a potassium channel.

It localises to the cell membrane. In terms of biological role, catalytic subunit of the KtrAB potassium uptake transporter. The 2 major potassium transporter complexes KtrAB and KtrCD confer resistance to both suddenly imposed and prolonged osmotic stress. This chain is Ktr system potassium uptake protein A (ktrA), found in Bacillus subtilis (strain 168).